The chain runs to 744 residues: NADH-ubiquinone oxidoreductase 78 kDa subunit, mitochondrial (744 aa).

Residues 1 to 10 (MLRSTLSRSA) show a composition bias toward polar residues. Positions 1 to 26 (MLRSTLSRSAWRTGRHQAARNASRAF) are disordered. The transit peptide at 1-33 (MLRSTLSRSAWRTGRHQAARNASRAFSATAQRP) directs the protein to the mitochondrion. The 79-residue stretch at 34–112 (AEVELTIDGK…GMVVKTNSPL (79 aa)) folds into the 2Fe-2S ferredoxin-type domain. The [2Fe-2S] cluster site is built by Cys68, Cys79, Cys82, and Cys96. Residues 112-151 (LTHKAREGVMEFLLANHPLDCPICDQGGECDLQDQSMRYG) enclose the 4Fe-4S His(Cys)3-ligated-type domain. Residues His128, Cys132, Cys135, Cys141, Cys182, Cys185, Cys188, and Cys232 each coordinate [4Fe-4S] cluster. The 4Fe-4S Mo/W bis-MGD-type domain maps to 251–307 (LKKTESIDVLDGLGSNIRVDTRGLEVMRILPRLNDEVNEEWINDKTRFACDGLKTQR).

This sequence belongs to the complex I 75 kDa subunit family. In terms of assembly, complex I is composed of about 40 different subunits. [2Fe-2S] cluster serves as cofactor. Requires [4Fe-4S] cluster as cofactor.

It localises to the mitochondrion inner membrane. It catalyses the reaction a ubiquinone + NADH + 5 H(+)(in) = a ubiquinol + NAD(+) + 4 H(+)(out). Core subunit of the mitochondrial membrane respiratory chain NADH dehydrogenase (Complex I) that is believed to belong to the minimal assembly required for catalysis. Complex I functions in the transfer of electrons from NADH to the respiratory chain. The immediate electron acceptor for the enzyme is believed to be ubiquinone. This is the largest subunit of complex I and it is a component of the iron-sulfur (IP) fragment of the enzyme. It may form part of the active site crevice where NADH is oxidized. In Neurospora crassa (strain ATCC 24698 / 74-OR23-1A / CBS 708.71 / DSM 1257 / FGSC 987), this protein is NADH-ubiquinone oxidoreductase 78 kDa subunit, mitochondrial (nuo78).